The primary structure comprises 342 residues: Dysbindin (342 aa).

Position 11 is a phosphoserine (Ser11). The stretch at Leu83–Lys180 forms a coiled coil. The short motif at Leu243 to Leu256 is the Nuclear export signal element. The segment at Asn263 to Ser342 is disordered. Low complexity predominate over residues Pro286–Pro305. 3 positions are modified to phosphoserine: Ser316, Ser321, and Ser340.

It belongs to the dysbindin family. Interacts (via its coiled coil domain) with KXD1. Interacts with CMYA5, PI4K2 and RNF151. Component of the biogenesis of lysosome-related organelles complex 1 (BLOC-1) composed of at least BLOC1S1, BLOC1S2, BLOC1S3, BLOC1S4, BLOC1S5, BLOC1S6, DTNBP1/BLOC1S7 and SNAPIN/BLOC1S8. Interacts directly in the complex with BLOC1S5, BLOC1S6 and SNAPIN/BLOC1S8. The BLOC-1 complex associates with the AP-3 protein complex and membrane protein cargos. This BLOC-1 complex also associates with the BLOC-2 complex in endosomes. Binds to DTNA and DTNB but may not be a physiological binding partner. Interacts with the DNA-dependent protein kinase complex DNA-PK; the interaction phosphorylates DTNBP1 in vitro. Interacts directly in this complex with XRCC5 and XRCC6. Interacts with AP3M1, AP3B2 and TRIM32. Interacts with XPO1; the interaction exports DTNBP1 out of the nucleus. In terms of processing, ubiquitinated by TRIM32. Ubiquitination leads to DTNBP1 degradation.

The protein localises to the cytoplasm. It is found in the cytoplasmic vesicle membrane. Its subcellular location is the cytoplasmic vesicle. It localises to the secretory vesicle. The protein resides in the synaptic vesicle membrane. The protein localises to the endosome membrane. It is found in the melanosome membrane. Its subcellular location is the nucleus. It localises to the postsynaptic density. The protein resides in the presynaptic cell membrane. The protein localises to the endoplasmic reticulum. Component of the BLOC-1 complex, a complex that is required for normal biogenesis of lysosome-related organelles (LRO), such as platelet dense granules and melanosomes. In concert with the AP-3 complex, the BLOC-1 complex is required to target membrane protein cargos into vesicles assembled at cell bodies for delivery into neurites and nerve terminals. The BLOC-1 complex, in association with SNARE proteins, is also proposed to be involved in neurite extension. Associates with the BLOC-2 complex to facilitate the transport of TYRP1 independent of AP-3 function. Plays a role in synaptic vesicle trafficking and in neurotransmitter release. Plays a role in the regulation of cell surface exposure of DRD2. May play a role in actin cytoskeleton reorganization and neurite outgrowth. May modulate MAPK8 phosphorylation. Appears to promote neuronal transmission and viability through regulating the expression of SNAP25 and SYN1, modulating PI3-kinase-Akt signaling and influencing glutamatergic release. Regulates the expression of SYN1 through binding to its promoter. Modulates prefrontal cortical activity via the dopamine/D2 pathway. This Bos taurus (Bovine) protein is Dysbindin (DTNBP1).